Consider the following 222-residue polypeptide: Phosphoribosylformylglycinamidine synthase subunit PurQ (222 aa).

The Glutamine amidotransferase type-1 domain occupies 3–222 (AAVVVFPGSN…RALTGALAAV (220 aa)). C86 acts as the Nucleophile in catalysis. Catalysis depends on residues H194 and E196.

As to quaternary structure, part of the FGAM synthase complex composed of 1 PurL, 1 PurQ and 2 PurS subunits.

The protein resides in the cytoplasm. The enzyme catalyses N(2)-formyl-N(1)-(5-phospho-beta-D-ribosyl)glycinamide + L-glutamine + ATP + H2O = 2-formamido-N(1)-(5-O-phospho-beta-D-ribosyl)acetamidine + L-glutamate + ADP + phosphate + H(+). The catalysed reaction is L-glutamine + H2O = L-glutamate + NH4(+). It participates in purine metabolism; IMP biosynthesis via de novo pathway; 5-amino-1-(5-phospho-D-ribosyl)imidazole from N(2)-formyl-N(1)-(5-phospho-D-ribosyl)glycinamide: step 1/2. Part of the phosphoribosylformylglycinamidine synthase complex involved in the purines biosynthetic pathway. Catalyzes the ATP-dependent conversion of formylglycinamide ribonucleotide (FGAR) and glutamine to yield formylglycinamidine ribonucleotide (FGAM) and glutamate. The FGAM synthase complex is composed of three subunits. PurQ produces an ammonia molecule by converting glutamine to glutamate. PurL transfers the ammonia molecule to FGAR to form FGAM in an ATP-dependent manner. PurS interacts with PurQ and PurL and is thought to assist in the transfer of the ammonia molecule from PurQ to PurL. The sequence is that of Phosphoribosylformylglycinamidine synthase subunit PurQ from Roseobacter denitrificans (strain ATCC 33942 / OCh 114) (Erythrobacter sp. (strain OCh 114)).